We begin with the raw amino-acid sequence, 182 residues long: ADP-ribosylation factor-like protein 11 (182 aa).

G2 is lipidated: N-myristoyl glycine. GTP-binding positions include 19 to 26 (GLDSAGKT), 63 to 67 (DVGGQ), and 122 to 125 (NKQE).

Belongs to the small GTPase superfamily. Arf family.

In terms of biological role, may play a role in apoptosis. May act as a tumor suppressor. This chain is ADP-ribosylation factor-like protein 11 (ARL11), found in Bos taurus (Bovine).